Reading from the N-terminus, the 239-residue chain is UPF0173 metal-dependent hydrolase rrnAC0300 (239 aa).

The protein belongs to the UPF0173 family.

The sequence is that of UPF0173 metal-dependent hydrolase rrnAC0300 from Haloarcula marismortui (strain ATCC 43049 / DSM 3752 / JCM 8966 / VKM B-1809) (Halobacterium marismortui).